Reading from the N-terminus, the 152-residue chain is Snaclec coagulation factor IX/factor X-binding protein subunit A (152 aa).

Residues 1–23 form the signal peptide; sequence MGRFIFMSFGLLVVAASLRGTGA. The 129-residue stretch at 24–152 folds into the C-type lectin domain; it reads DCLSGWSSYE…GQQNPFVCEA (129 aa). 3 cysteine pairs are disulfide-bonded: Cys25-Cys36, Cys53-Cys150, and Cys125-Cys142. Ca(2+) contacts are provided by Ser64, Glu66, and Glu70. Glu151 contacts Ca(2+).

This sequence belongs to the snaclec family. Heterodimer of subunits A and B; disulfide-linked. As to expression, expressed by the venom gland.

It is found in the secreted. Its function is as follows. Anticoagulant protein which binds to the gamma-carboxyglutamic acid-domain regions of factors IX (F9) and factor X (F10) in the presence of calcium with a 1 to 1 stoichiometry. The chain is Snaclec coagulation factor IX/factor X-binding protein subunit A from Protobothrops flavoviridis (Habu).